Consider the following 139-residue polypeptide: Large ribosomal subunit protein bL17 (139 aa).

It belongs to the bacterial ribosomal protein bL17 family. In terms of assembly, part of the 50S ribosomal subunit. Contacts protein L32.

The polypeptide is Large ribosomal subunit protein bL17 (Myxococcus xanthus (strain DK1622)).